Reading from the N-terminus, the 280-residue chain is UPF0494 membrane protein C750.06c (280 aa).

Transmembrane regions (helical) follow at residues 107–127, 144–164, 178–198, and 199–219; these read WPLL…KFEV, IWVP…SLIF, VIIA…GMII, and AALG…LYFG.

It belongs to the UPF0494 family.

The protein resides in the cytoplasm. The protein localises to the vacuole. It is found in the membrane. This is UPF0494 membrane protein C750.06c from Schizosaccharomyces pombe (strain 972 / ATCC 24843) (Fission yeast).